A 231-amino-acid chain; its full sequence is Acyl-protein thioesterase 2 (231 aa).

Cys2 carries the S-palmitoyl cysteine lipid modification. Ser82 is subject to Phosphoserine. Catalysis depends on charge relay system residues Ser122, Asp176, and His210.

Belongs to the AB hydrolase superfamily. AB hydrolase 2 family.

The protein localises to the cytoplasm. It carries out the reaction S-hexadecanoyl-L-cysteinyl-[protein] + H2O = L-cysteinyl-[protein] + hexadecanoate + H(+). The catalysed reaction is prostaglandin E2 1-glyceryl ester + H2O = prostaglandin E2 + glycerol + H(+). It catalyses the reaction 1-hexadecanoyl-sn-glycero-3-phosphocholine + H2O = sn-glycerol 3-phosphocholine + hexadecanoate + H(+). The enzyme catalyses 1-octadecanoyl-sn-glycero-3-phosphocholine + H2O = octadecanoate + sn-glycerol 3-phosphocholine + H(+). It carries out the reaction 1-hexadecanoyl-sn-glycero-3-phosphate + H2O = sn-glycerol 3-phosphate + hexadecanoate + H(+). The catalysed reaction is 1-hexadecanoyl-sn-glycero-3-phospho-L-serine + H2O = sn-glycero-3-phospho-L-serine + hexadecanoate + H(+). In terms of biological role, acts as an acyl-protein thioesterase hydrolyzing fatty acids from S-acylated cysteine residues in proteins such as trimeric G alpha proteins, GSDMD, GAP43, ZDHHC6 or HRAS. Deacylates GAP43. Mediates depalmitoylation of ZDHHC6. Has lysophospholipase activity. Hydrolyzes prostaglandin glycerol esters (PG-Gs) in the following order prostaglandin D2-glycerol ester (PGD2-G) &gt; prostaglandin E2 glycerol ester (PGE2-G) &gt; prostaglandin F2-alpha-glycerol ester (PGF2-alpha-G). Hydrolyzes 1-arachidonoylglycerol but not 2-arachidonoylglycerol or arachidonoylethanolamide. This chain is Acyl-protein thioesterase 2 (Lypla2), found in Rattus norvegicus (Rat).